The primary structure comprises 255 residues: 5'-nucleotidase SurE (255 aa).

The a divalent metal cation site is built by D8, D9, S40, and N93.

Belongs to the SurE nucleotidase family. A divalent metal cation is required as a cofactor.

The protein localises to the cytoplasm. It catalyses the reaction a ribonucleoside 5'-phosphate + H2O = a ribonucleoside + phosphate. Its function is as follows. Nucleotidase that shows phosphatase activity on nucleoside 5'-monophosphates. The sequence is that of 5'-nucleotidase SurE from Bradyrhizobium diazoefficiens (strain JCM 10833 / BCRC 13528 / IAM 13628 / NBRC 14792 / USDA 110).